Consider the following 166-residue polypeptide: Spiderine-1b (166 aa).

Positions 1–18 (MKFALVLLGICAFYLVNA) are cleaved as a signal peptide. The propeptide at 19–58 (TGDLETELEASELQELQEALDLIGETSLESLEAEELEEAR) is removed in mature form. The linear cationic cytotoxin domain stretch occupies residues 59 to 99 (KFKWGKLFSAAKKLYKKGKKLSKNKNFKKALKFGKQLAKNL). The Oxytoxin-type inhibitor cystine knot (ICK) domain maps to 113-166 (NNKCWAIGTTCSDDCDCCPEHHCHCPAGKWLPGLFRCTCQVTESDKVNKCPPAE). Intrachain disulfides connect Cys116–Cys130, Cys123–Cys135, Cys127–Cys162, Cys129–Cys151, and Cys137–Cys149.

It belongs to the spiderine family. Cationic/spiderine subfamily. As to expression, expressed by the venom gland.

Its subcellular location is the secreted. Its function is as follows. Has antimicrobial, insecticidal, cytolytic and cytotoxic activity. The sequence is that of Spiderine-1b from Oxyopes takobius (Lynx spider).